We begin with the raw amino-acid sequence, 426 residues long: Glutamyl-tRNA reductase (426 aa).

Residues 52–55 (TCNR), Ser110, 115–117 (EYE), and Gln121 contribute to the substrate site. The active-site Nucleophile is Cys53. 190 to 195 (GAGEMG) lines the NADP(+) pocket.

Belongs to the glutamyl-tRNA reductase family. In terms of assembly, homodimer.

It catalyses the reaction (S)-4-amino-5-oxopentanoate + tRNA(Glu) + NADP(+) = L-glutamyl-tRNA(Glu) + NADPH + H(+). It functions in the pathway porphyrin-containing compound metabolism; protoporphyrin-IX biosynthesis; 5-aminolevulinate from L-glutamyl-tRNA(Glu): step 1/2. Its function is as follows. Catalyzes the NADPH-dependent reduction of glutamyl-tRNA(Glu) to glutamate 1-semialdehyde (GSA). The protein is Glutamyl-tRNA reductase of Saccharolobus islandicus (strain Y.N.15.51 / Yellowstone #2) (Sulfolobus islandicus).